We begin with the raw amino-acid sequence, 424 residues long: MEKALLEIEEKARLARAASRPLSYASSAQKDAALKNIARCLLDNEPAILEANLKDQNEAKASGMLPAMLDRLIIDQSRLEGIAKDTFAIAALPDPVGEIFDMNTMPNGLIIGKKRVPLGVIAAIYESRPNVTVDIASLCLKAGNAVILRGGKETIHSNTILAKLIRQAVEQAGLPKEAVQFIENTDRNLVNHLLKLSDQIDLVIPRGGAGLISYVKQNSFIPVVAGGIGVVHVYVDADAKVTDAVNIAYNSKVQRPTVCNAMDTLLVHKDIAPVFLPAVAAEWSKAGVEIRADEAALKILENTFGCKLIPATPDDWGKEFLALIAAVKVVDSLDEALSHIARYGSGHTESIVTQNYTSSQRFLNEVDAAAVMVNASTRFTDGSQFGLGAELGISTQKMHARGPMGLKEITSYKWIVYGSGQIRG.

It belongs to the gamma-glutamyl phosphate reductase family.

The protein resides in the cytoplasm. It carries out the reaction L-glutamate 5-semialdehyde + phosphate + NADP(+) = L-glutamyl 5-phosphate + NADPH + H(+). The protein operates within amino-acid biosynthesis; L-proline biosynthesis; L-glutamate 5-semialdehyde from L-glutamate: step 2/2. Catalyzes the NADPH-dependent reduction of L-glutamate 5-phosphate into L-glutamate 5-semialdehyde and phosphate. The product spontaneously undergoes cyclization to form 1-pyrroline-5-carboxylate. The sequence is that of Gamma-glutamyl phosphate reductase from Dehalococcoides mccartyi (strain CBDB1).